We begin with the raw amino-acid sequence, 517 residues long: Phenol 2-monooxygenase, oxygenase component DmpN (517 aa).

E109, E139, H142, E200, E234, and H237 together coordinate Fe cation.

This sequence belongs to the TmoA/XamoA family. As to quaternary structure, the multicomponent enzyme phenol hydroxylase is formed by DmpL (P1 component), DmpM (P2 component), DmpN (P3 component), DmpO (P4 component) and DmpP (P5 component). The oxygenase component is a dimer composed of three subunits, DmpL, DmpN and DmpO (DmpLNO). DmpN interacts with the auxiliary protein DmpK (P0 component). It depends on Fe(2+) as a cofactor.

It carries out the reaction phenol + NADH + O2 + H(+) = catechol + NAD(+) + H2O. It functions in the pathway aromatic compound metabolism; phenol degradation. Its activity is regulated as follows. Requires DmpM for efficient turnover. The activity of DmpLNO oxygenase is inhibited by dithiothreitol (DTT) by a mechanism apparently involving H(2)O(2) generation. Part of a multicomponent enzyme which catalyzes the degradation of phenol and some of its methylated derivatives. DmpL, DmpN and DmpO form the oxygenase component of the complex. Required for growth on phenol and for in vitro phenol hydroxylase activity. In Pseudomonas sp. (strain CF600), this protein is Phenol 2-monooxygenase, oxygenase component DmpN.